The chain runs to 270 residues: MMKRNFDQVKRIVIKIGTSSLVQENGKINLEKIDQLAFVMSSLKNKGKDLILVSSGAMGFGLDILKMDKRPSDLAKQQAVSSVGQVAMMSLYSQIFSHYQTNVSQILLTRDVVIFPESLANVTNAFESLMAMGIVPIVNENDAVSVDEMDHATKFGDNDRLSAVVAEITKADLLIMLSDIDGLYDKNPTIYEDAQLRSIVTEITDEIIKSAGGAGSKFGTGGMLSKIQSAQMVFANNGQMVLMNGKNPRDILRVLEGKEIGTWFVQEKGN.

K15 provides a ligand contact to ATP. Substrate is bound by residues S55, D142, and N158. Residues 178–179 (SD) and 220–226 (TGGMLSK) each bind ATP.

The protein belongs to the glutamate 5-kinase family.

It localises to the cytoplasm. It carries out the reaction L-glutamate + ATP = L-glutamyl 5-phosphate + ADP. The protein operates within amino-acid biosynthesis; L-proline biosynthesis; L-glutamate 5-semialdehyde from L-glutamate: step 1/2. Catalyzes the transfer of a phosphate group to glutamate to form L-glutamate 5-phosphate. The chain is Glutamate 5-kinase from Streptococcus uberis (strain ATCC BAA-854 / 0140J).